Consider the following 209-residue polypeptide: Protein GrpE (209 aa).

Positions Met-1–Asn-63 are disordered. Composition is skewed to basic and acidic residues over residues Lys-7–Pro-42 and Glu-50–Asn-63.

Belongs to the GrpE family. As to quaternary structure, homodimer.

The protein localises to the cytoplasm. Functionally, participates actively in the response to hyperosmotic and heat shock by preventing the aggregation of stress-denatured proteins, in association with DnaK and GrpE. It is the nucleotide exchange factor for DnaK and may function as a thermosensor. Unfolded proteins bind initially to DnaJ; upon interaction with the DnaJ-bound protein, DnaK hydrolyzes its bound ATP, resulting in the formation of a stable complex. GrpE releases ADP from DnaK; ATP binding to DnaK triggers the release of the substrate protein, thus completing the reaction cycle. Several rounds of ATP-dependent interactions between DnaJ, DnaK and GrpE are required for fully efficient folding. The chain is Protein GrpE from Methanosarcina mazei (strain ATCC BAA-159 / DSM 3647 / Goe1 / Go1 / JCM 11833 / OCM 88) (Methanosarcina frisia).